The primary structure comprises 22 residues: Heat shock 70-related protein 1, mitochondrial (22 aa).

It belongs to the heat shock protein 70 family.

It is found in the mitochondrion. This Leishmania tarentolae (Sauroleishmania tarentolae) protein is Heat shock 70-related protein 1, mitochondrial.